Here is a 428-residue protein sequence, read N- to C-terminus: Histidinol dehydrogenase (428 aa).

Substrate is bound by residues Ser234, Gln256, and His259. The Zn(2+) site is built by Gln256 and His259. Catalysis depends on proton acceptor residues Glu323 and His324. Residues His324, Asp357, Glu411, and His416 each contribute to the substrate site. Asp357 provides a ligand contact to Zn(2+). A Zn(2+)-binding site is contributed by His416.

Belongs to the histidinol dehydrogenase family. The cofactor is Zn(2+).

The enzyme catalyses L-histidinol + 2 NAD(+) + H2O = L-histidine + 2 NADH + 3 H(+). It functions in the pathway amino-acid biosynthesis; L-histidine biosynthesis; L-histidine from 5-phospho-alpha-D-ribose 1-diphosphate: step 9/9. In terms of biological role, catalyzes the sequential NAD-dependent oxidations of L-histidinol to L-histidinaldehyde and then to L-histidine. The polypeptide is Histidinol dehydrogenase (Campylobacter jejuni (strain RM1221)).